The sequence spans 572 residues: Hemagglutinin-neuraminidase (572 aa).

At 1–31 the chain is on the intravirion side; it reads MEYWKHTNHGKDAGNELETSMATHGNKITNK. A helical transmembrane segment spans residues 32 to 52; it reads ITYILWTIILVLLSIVFIIVL. Residues 53-572 are Virion surface-facing; sequence INSIKSEKAH…FKTEIPKSCS (520 aa). 2 disulfide bridges follow: Cys-190–Cys-214 and Cys-256–Cys-269. Residues 252–257 form an involved in neuraminidase activity region; that stretch reads NRKSCS. N-linked (GlcNAc...) asparagine; by host glycosylation is found at Asn-308 and Asn-351. 2 cysteine pairs are disulfide-bonded: Cys-355/Cys-469 and Cys-463/Cys-473. The N-linked (GlcNAc...) asparagine; by host glycan is linked to Asn-523. An intrachain disulfide couples Cys-535 to Cys-544.

It belongs to the paramyxoviruses hemagglutinin-neuraminidase family. Homotetramer; composed of disulfide-linked homodimers. Interacts with F protein trimer.

The protein resides in the virion membrane. The protein localises to the host cell membrane. The enzyme catalyses Hydrolysis of alpha-(2-&gt;3)-, alpha-(2-&gt;6)-, alpha-(2-&gt;8)- glycosidic linkages of terminal sialic acid residues in oligosaccharides, glycoproteins, glycolipids, colominic acid and synthetic substrates.. Functionally, attaches the virus to sialic acid-containing cell receptors and thereby initiating infection. Binding of HN protein to the receptor induces a conformational change that allows the F protein to trigger virion/cell membranes fusion. Neuraminidase activity ensures the efficient spread of the virus by dissociating the mature virions from the neuraminic acid containing glycoproteins. The chain is Hemagglutinin-neuraminidase (HN) from Human parainfluenza 3 virus (strain Wash/47885/57) (HPIV-3).